The sequence spans 428 residues: GTPase Obg (428 aa).

The 158-residue stretch at 1 to 158 (MFVDQVKIYV…RYVTLELKLL (158 aa)) folds into the Obg domain. Positions 159–329 (ADVGLVGFPS…LLFAIADLLE (171 aa)) constitute an OBG-type G domain. Residues 165–172 (GFPSVGKS), 190–194 (FTTIV), 212–215 (DLPG), 282–285 (NKMD), and 310–312 (SAV) contribute to the GTP site. Ser-172 and Thr-192 together coordinate Mg(2+). Residues 350 to 428 (KLEKEEAPFH…LLNYEFEFVD (79 aa)) enclose the OCT domain.

Belongs to the TRAFAC class OBG-HflX-like GTPase superfamily. OBG GTPase family. In terms of assembly, monomer. Requires Mg(2+) as cofactor.

The protein localises to the cytoplasm. In terms of biological role, an essential GTPase which binds GTP, GDP and possibly (p)ppGpp with moderate affinity, with high nucleotide exchange rates and a fairly low GTP hydrolysis rate. Plays a role in control of the cell cycle, stress response, ribosome biogenesis and in those bacteria that undergo differentiation, in morphogenesis control. In Anoxybacillus flavithermus (strain DSM 21510 / WK1), this protein is GTPase Obg.